The chain runs to 336 residues: MAELKLGYKASAEQFAPRELVELAVLAEAAGMDSATVSDHFQPWRHEGGHAPFSLAWMTAVGERTQRLVLGTSVLTPTFRYNPAVIAQAFATMGCLYPGRVFLGVGTGEALNEIATGYIGQWPEFKERFARLRESVKLMRELWLGDRVDFDGEYYKLRGASIYDVPEGGIPVYIAAGGPVVAKYAGRAGDGFICTSGKGEELYKDKLIPAVREGAEAAGRNAEDIDRMIEIKISYDPDPELALENTRFWAPLSLTPEQKHSIDDPIEMEKAADALPIEQVAKRWIVASDPDEAVEKVGQYVTWGLNHLVFHAPGHDQRRFLDLFKKDLEPRLRKLG.

Residue Asp39 coordinates coenzyme F420-(gamma-Glu)n. His40 acts as the Proton donor in catalysis. Residues Thr76 and 107–108 (TG) contribute to the coenzyme F420-(gamma-Glu)n site. Glu109 acts as the Proton acceptor in catalysis. Coenzyme F420-(gamma-Glu)n contacts are provided by residues Asn112, 177–178 (GG), and 180–181 (VV). Substrate is bound by residues Thr195, Lys198, Lys259, and Arg283.

Belongs to the F420-dependent glucose-6-phosphate dehydrogenase family. Homodimer.

It carries out the reaction oxidized coenzyme F420-(gamma-L-Glu)(n) + D-glucose 6-phosphate + H(+) = 6-phospho-D-glucono-1,5-lactone + reduced coenzyme F420-(gamma-L-Glu)(n). Its function is as follows. Catalyzes the coenzyme F420-dependent oxidation of glucose 6-phosphate (G6P) to 6-phosphogluconolactone. Appears to have a role in resistance to oxidative stress, via its consumption of G6P that serves as a source of reducing power to combat oxidative stress in mycobacteria. This Mycolicibacterium fortuitum (Mycobacterium fortuitum) protein is F420-dependent glucose-6-phosphate dehydrogenase.